Reading from the N-terminus, the 304-residue chain is Sulfate adenylyltransferase subunit 2 2 (304 aa).

Belongs to the PAPS reductase family. CysD subfamily. In terms of assembly, heterodimer composed of CysD, the smaller subunit, and CysN.

The enzyme catalyses sulfate + ATP + H(+) = adenosine 5'-phosphosulfate + diphosphate. It functions in the pathway sulfur metabolism; hydrogen sulfide biosynthesis; sulfite from sulfate: step 1/3. Functionally, with CysN forms the ATP sulfurylase (ATPS) that catalyzes the adenylation of sulfate producing adenosine 5'-phosphosulfate (APS) and diphosphate, the first enzymatic step in sulfur assimilation pathway. APS synthesis involves the formation of a high-energy phosphoric-sulfuric acid anhydride bond driven by GTP hydrolysis by CysN coupled to ATP hydrolysis by CysD. This Marinobacter nauticus (strain ATCC 700491 / DSM 11845 / VT8) (Marinobacter aquaeolei) protein is Sulfate adenylyltransferase subunit 2 2.